Here is a 321-residue protein sequence, read N- to C-terminus: Probable nucleosome assembly protein (321 aa).

The segment covering 272 to 298 (EENDYDFGEDFEDEEGEDDDEEDDEEE) has biased composition (acidic residues). Residues 272 to 321 (EENDYDFGEDFEDEEGEDDDEEDDEEEQTIKKPSGKGKAQPQQPQDCKQQ) are disordered. Over residues 311-321 (QPQQPQDCKQQ) the composition is skewed to low complexity.

It belongs to the nucleosome assembly protein (NAP) family.

It is found in the nucleus. Functionally, may modulate chromatin structure by regulation of histone octamer formation. The sequence is that of Probable nucleosome assembly protein (nap1) from Dictyostelium discoideum (Social amoeba).